The primary structure comprises 318 residues: Small ribosomal subunit biogenesis GTPase RsgA (318 aa).

The span at 1-16 (MTRGKPGRAGHDRRHA) shows a compositional bias: basic residues. Residues 1-21 (MTRGKPGRAGHDRRHASTGEH) are disordered. The CP-type G domain maps to 84 to 249 (SDQFKSKQLA…LIDSPGFQEF (166 aa)). Residues 133–136 (NKID) and 187–195 (GQSGMGKSS) contribute to the GTP site. Zn(2+) contacts are provided by Cys273, Cys278, His280, and Cys286.

The protein belongs to the TRAFAC class YlqF/YawG GTPase family. RsgA subfamily. In terms of assembly, monomer. Associates with 30S ribosomal subunit, binds 16S rRNA. Requires Zn(2+) as cofactor.

The protein localises to the cytoplasm. Functionally, one of several proteins that assist in the late maturation steps of the functional core of the 30S ribosomal subunit. Helps release RbfA from mature subunits. May play a role in the assembly of ribosomal proteins into the subunit. Circularly permuted GTPase that catalyzes slow GTP hydrolysis, GTPase activity is stimulated by the 30S ribosomal subunit. The polypeptide is Small ribosomal subunit biogenesis GTPase RsgA (Ralstonia nicotianae (strain ATCC BAA-1114 / GMI1000) (Ralstonia solanacearum)).